The sequence spans 124 residues: Early nodulin-5 (124 aa).

An N-terminal signal peptide occupies residues 1 to 12; sequence IIFSMWLLFSFS.

Functionally, involved in the infection process during the plant-rhizobium interaction. This Vicia sativa (Spring vetch) protein is Early nodulin-5 (ENOD5).